Reading from the N-terminus, the 749-residue chain is Probable serine/threonine-protein kinase fhkD (749 aa).

Residues 47-150 (IFFGRNPKRC…NGTFVKGCIL (104 aa)) form the FHA domain. The span at 84 to 126 (NNNNNDGDNNNNNNNNNNNNNNNNNNNNNNNNNNNNNNNNNNN) shows a compositional bias: low complexity. The disordered stretch occupies residues 84 to 130 (NNNNNDGDNNNNNNNNNNNNNNNNNNNNNNNNNNNNNNNNNNNTTKN). The Protein kinase domain maps to 199–472 (YSIQGILGTG…TKGALSHDWF (274 aa)). Residues 205–213 (LGTGNFSVV) and K228 each bind ATP. The active-site Proton acceptor is D323. 2 disordered regions span residues 512 to 620 (NIPM…PAII) and 640 to 749 (CTPT…LKGS). Residues 516–561 (TLNSTTTNTTSPNNNNNNNNNNNNKNNNKNIIKSLNSNSNNYNNNS) show a composition bias toward low complexity. The segment covering 562-572 (VLKKTSQSPKT) has biased composition (polar residues). Composition is skewed to low complexity over residues 590 to 611 (NNNN…NNNN) and 651 to 667 (TNST…TSNS). Residues 668–687 (VTMGTSSTSIPVSNSITMKS) are compositionally biased toward polar residues. Basic and acidic residues predominate over residues 696–707 (DGDKKRKEKESS). Positions 708–739 (SSENVNDVIVINSNNHNNNNNNNHNINNGISS) are enriched in low complexity.

This sequence belongs to the protein kinase superfamily. CAMK Ser/Thr protein kinase family. CHK2 subfamily.

The catalysed reaction is L-seryl-[protein] + ATP = O-phospho-L-seryl-[protein] + ADP + H(+). It catalyses the reaction L-threonyl-[protein] + ATP = O-phospho-L-threonyl-[protein] + ADP + H(+). The chain is Probable serine/threonine-protein kinase fhkD (fhkD) from Dictyostelium discoideum (Social amoeba).